Reading from the N-terminus, the 545-residue chain is Chaperonin GroEL 4 (545 aa).

ATP contacts are provided by residues 30-33 (TLGP), lysine 51, 87-91 (DGTTT), glycine 415, and aspartate 495.

Belongs to the chaperonin (HSP60) family. As to quaternary structure, forms a cylinder of 14 subunits composed of two heptameric rings stacked back-to-back. Interacts with the co-chaperonin GroES.

It is found in the cytoplasm. It catalyses the reaction ATP + H2O + a folded polypeptide = ADP + phosphate + an unfolded polypeptide.. Its function is as follows. Together with its co-chaperonin GroES, plays an essential role in assisting protein folding. The GroEL-GroES system forms a nano-cage that allows encapsulation of the non-native substrate proteins and provides a physical environment optimized to promote and accelerate protein folding. This chain is Chaperonin GroEL 4, found in Rhizobium meliloti (strain 1021) (Ensifer meliloti).